The chain runs to 84 residues: U2-theraphotoxin-Cg1b 2 (84 aa).

An N-terminal signal peptide occupies residues 1-21 (MKVSVLITLAVLGVMFLLTSA). The propeptide occupies 22–48 (EERGSDQMDSPAWLKSMEIIFQSEERE). 3 disulfide bridges follow: Cys49–Cys63, Cys56–Cys68, and Cys62–Cys76.

Belongs to the neurotoxin 10 (Hwtx-1) family. 06 (F4b) subfamily. As to expression, expressed by the venom gland.

It localises to the secreted. In terms of biological role, probable ion channel inhibitor. The sequence is that of U2-theraphotoxin-Cg1b 2 from Chilobrachys guangxiensis (Chinese earth tiger tarantula).